Here is a 566-residue protein sequence, read N- to C-terminus: Liver carboxylesterase 1 (566 aa).

Residues 1 to 18 (MWLRALVLATLAAFTAWG) form the signal peptide. N79 is a glycosylation site (N-linked (GlcNAc...) asparagine). C87 and C116 are joined by a disulfide. The Acyl-ester intermediate role is filled by S221. Cysteines 274 and 285 form a disulfide. The Charge relay system role is filled by E354. Position 379 is a phosphoserine (S379). H467 acts as the Charge relay system in catalysis.

Belongs to the type-B carboxylesterase/lipase family. As to quaternary structure, homotrimer and homohexamer. Binds to beta-glucuronidase.

Its subcellular location is the endoplasmic reticulum lumen. It localises to the cytoplasm. The protein localises to the lipid droplet. The enzyme catalyses a carboxylic ester + H2O = an alcohol + a carboxylate + H(+). The catalysed reaction is cholesteryl (9Z-octadecenoate) + H2O = cholesterol + (9Z)-octadecenoate + H(+). It carries out the reaction 2-(5Z,8Z,11Z,14Z-eicosatetraenoyl)-glycerol + H2O = glycerol + (5Z,8Z,11Z,14Z)-eicosatetraenoate + H(+). It catalyses the reaction prostaglandin E2 1-glyceryl ester + H2O = prostaglandin E2 + glycerol + H(+). The enzyme catalyses a cholesterol ester + H2O = cholesterol + a fatty acid + H(+). The catalysed reaction is prostaglandin F2alpha 1-glyceryl ester + H2O = prostaglandin F2alpha + glycerol + H(+). Involved in the detoxification of xenobiotics and in the activation of ester and amide prodrugs. Hydrolyzes aromatic and aliphatic esters, but has no catalytic activity toward amides or a fatty acyl-CoA ester. Displays fatty acid ethyl ester synthase activity, catalyzing the ethyl esterification of oleic acid to ethyloleate. Converts monoacylglycerides to free fatty acids and glycerol. Hydrolyzes of 2-arachidonoylglycerol and prostaglandins. Hydrolyzes cellular cholesteryl esters to free cholesterols and promotes reverse cholesterol transport (RCT) by facilitating both the initial and final steps in the process. First of all, allows free cholesterol efflux from macrophages to extracellular cholesterol acceptors and secondly, releases free cholesterol from lipoprotein-delivered cholesteryl esters in the liver for bile acid synthesis or direct secretion into the bile. This Macaca fascicularis (Crab-eating macaque) protein is Liver carboxylesterase 1.